Here is a 1043-residue protein sequence, read N- to C-terminus: Phosphatidylinositol 4,5-bisphosphate 3-kinase catalytic subunit delta isoform (1043 aa).

Residues 16–105 (ESQSVVVDFL…LPVLRLVARE (90 aa)) form the PI3K-ABD domain. In terms of domain architecture, PI3K-RBD spans 187-278 (NRALLVNVKF…GLTPHLTMVH (92 aa)). The interval 287-312 (DEQSNPAPQVQKPRAKPPPIPAKKPS) is disordered. In terms of domain architecture, C2 PI3K-type spans 319 to 476 (LEQPFSIELI…SAAALVIYLP (158 aa)). A PIK helical domain is found at 496–673 (RHGERGRITE…GLIMEAYCRG (178 aa)). Position 523 is a phosphotyrosine (Tyr-523). The PI3K/PI4K catalytic domain maps to 744-1026 (CVEQCTFMDS…KFNEALRESW (283 aa)). The G-loop stretch occupies residues 750 to 756 (FMDSKMK). The segment at 889-897 (GIGDRHSDN) is catalytic loop. The activation loop stretch occupies residues 908 to 934 (HIDFGHFLGNFKTKFGINRERVPFILT). Phosphoserine; by autocatalysis is present on Ser-1038.

It belongs to the PI3/PI4-kinase family. In terms of assembly, heterodimer of a catalytic subunit PIK3CD and a p85 regulatory subunit (PIK3R1, PIK3R2 or PIK3R3). Interacts with ERAS and HRAS. Post-translationally, autophosphorylation on Ser-1038 results in the almost complete inactivation of the lipid kinase activity. In terms of tissue distribution, abundantly expressed in adult mouse spleen as well as in testis. Isoform 1 is expressed in spleen and lung (at protein level). Isoform 1 is expressed predominantly in leukocytes.

It localises to the cytoplasm. The enzyme catalyses a 1,2-diacyl-sn-glycero-3-phospho-(1D-myo-inositol-4,5-bisphosphate) + ATP = a 1,2-diacyl-sn-glycero-3-phospho-(1D-myo-inositol-3,4,5-trisphosphate) + ADP + H(+). It catalyses the reaction a 1,2-diacyl-sn-glycero-3-phospho-(1D-myo-inositol) + ATP = a 1,2-diacyl-sn-glycero-3-phospho-(1D-myo-inositol-3-phosphate) + ADP + H(+). The catalysed reaction is 1-octadecanoyl-2-(5Z,8Z,11Z,14Z)-eicosatetraenoyl-sn-glycero-3-phospho-1D-myo-inositol 4,5-bisphosphate + ATP = 1-octadecanoyl-2-(5Z,8Z,11Z,14Z-eicosatetraenoyl)-sn-glycero-3-phospho-(1D-myo-inositol 3,4,5-triphosphate) + ADP + H(+). Its pathway is phospholipid metabolism; phosphatidylinositol phosphate biosynthesis. Its activity is regulated as follows. Activated by growth factors and cytokine receptors through a tyrosine-kinase-dependent mechanism. Activated by RAS. IC87114 inhibits lipid kinase activity and is selective in cells at doses up to 5-10 uM. Among other effects, IC87114 reduces allergic responses, prevents the recruitment of antigen-specific T cells into target tissue, and affects natural killer cell chemotaxis. Its function is as follows. Phosphoinositide-3-kinase (PI3K) phosphorylates phosphatidylinositol (PI) and its phosphorylated derivatives at position 3 of the inositol ring to produce 3-phosphoinositides. Uses ATP and PtdIns(4,5)P2 (phosphatidylinositol 4,5-bisphosphate) to generate phosphatidylinositol 3,4,5-trisphosphate (PIP3). PIP3 plays a key role by recruiting PH domain-containing proteins to the membrane, including AKT1 and PDPK1, activating signaling cascades involved in cell growth, survival, proliferation, motility and morphology. Mediates immune responses. Plays a role in B-cell development, proliferation, migration, and function. Required for B-cell receptor (BCR) signaling. Mediates B-cell proliferation response to anti-IgM, anti-CD40 and IL4 stimulation. Promotes cytokine production in response to TLR4 and TLR9. Required for antibody class switch mediated by TLR9. Involved in the antigen presentation function of B-cells. Involved in B-cell chemotaxis in response to CXCL13 and sphingosine 1-phosphate (S1P). Required for proliferation, signaling and cytokine production of naive, effector and memory T-cells. Required for T-cell receptor (TCR) signaling. Mediates TCR signaling events at the immune synapse. Activation by TCR leads to antigen-dependent memory T-cell migration and retention to antigenic tissues. Together with PIK3CG participates in T-cell development. Contributes to T-helper cell expansion and differentiation. Required for T-cell migration mediated by homing receptors SELL/CD62L, CCR7 and S1PR1 and antigen dependent recruitment of T-cells. Together with PIK3CG is involved in natural killer (NK) cell development and migration towards the sites of inflammation. Participates in NK cell receptor activation. Plays a role in NK cell maturation and cytokine production. Together with PIK3CG is involved in neutrophil chemotaxis and extravasation. Together with PIK3CG participates in neutrophil respiratory burst. Plays important roles in mast-cell development and mast cell mediated allergic response. Involved in stem cell factor (SCF)-mediated proliferation, adhesion and migration. Required for allergen-IgE-induced degranulation and cytokine release. The lipid kinase activity is required for its biological function. This chain is Phosphatidylinositol 4,5-bisphosphate 3-kinase catalytic subunit delta isoform (Pik3cd), found in Mus musculus (Mouse).